Here is a 253-residue protein sequence, read N- to C-terminus: Acetylglutamate kinase (253 aa).

Substrate contacts are provided by residues 40–41 (GG), arginine 62, and asparagine 154.

Belongs to the acetylglutamate kinase family. ArgB subfamily.

The protein resides in the cytoplasm. The enzyme catalyses N-acetyl-L-glutamate + ATP = N-acetyl-L-glutamyl 5-phosphate + ADP. The protein operates within amino-acid biosynthesis; L-arginine biosynthesis; N(2)-acetyl-L-ornithine from L-glutamate: step 2/4. In terms of biological role, catalyzes the ATP-dependent phosphorylation of N-acetyl-L-glutamate. The polypeptide is Acetylglutamate kinase (Staphylococcus saprophyticus subsp. saprophyticus (strain ATCC 15305 / DSM 20229 / NCIMB 8711 / NCTC 7292 / S-41)).